We begin with the raw amino-acid sequence, 253 residues long: ATP synthase subunit a (253 aa).

The next 6 membrane-spanning stretches (helical) occupy residues phenylalanine 30–alanine 50, phenylalanine 88–valine 108, isoleucine 118–isoleucine 138, phenylalanine 144–isoleucine 164, methionine 184–alanine 204, and valine 211–phenylalanine 231.

This sequence belongs to the ATPase A chain family. In terms of assembly, F-type ATPases have 2 components, CF(1) - the catalytic core - and CF(0) - the membrane proton channel. CF(1) has five subunits: alpha(3), beta(3), gamma(1), delta(1), epsilon(1). CF(0) has three main subunits: a(1), b(2) and c(9-12). The alpha and beta chains form an alternating ring which encloses part of the gamma chain. CF(1) is attached to CF(0) by a central stalk formed by the gamma and epsilon chains, while a peripheral stalk is formed by the delta and b chains.

The protein localises to the cell inner membrane. Functionally, key component of the proton channel; it plays a direct role in the translocation of protons across the membrane. The sequence is that of ATP synthase subunit a from Beijerinckia indica subsp. indica (strain ATCC 9039 / DSM 1715 / NCIMB 8712).